A 474-amino-acid polypeptide reads, in one-letter code: Lipoprotein lipase (474 aa).

The signal sequence occupies residues 1–27 (MESKALLLVALGVWLQSLTAFRGGVAA). Residues 32 to 53 (RDFSDIESKFALRTPEDTAEDT) are interaction with GPIHBP1. Cys-54 and Cys-67 are oxidised to a cystine. N-linked (GlcNAc...) asparagine glycosylation is present at Asn-70. A 3'-nitrotyrosine modification is found at Tyr-121. The active-site Nucleophile is Ser-159. Asp-183 serves as the catalytic Charge relay system. The residue at position 191 (Tyr-191) is a 3'-nitrotyrosine. Positions 194, 197, 199, and 202 each coordinate Ca(2+). Cysteines 243 and 266 form a disulfide. Residues 243–266 (CNIGEAIRVIAEKGLGDVDQLVKC) form an essential for determining substrate specificity region. His-268 (charge relay system) is an active-site residue. 2 disulfide bridges follow: Cys-291/Cys-310 and Cys-302/Cys-305. Residues 341–464 (FHYQVKIHFS…KGKDAAVFVK (124 aa)) enclose the PLAT domain. Tyr-343 is subject to 3'-nitrotyrosine. An N-linked (GlcNAc...) asparagine glycan is attached at Asn-386. The important for interaction with lipoprotein particles stretch occupies residues 417-421 (WSDWW). Residues 430–434 (KIRVK) form an important for heparin binding region. The interval 443–467 (IFCAREKVSHLQKGKDAAVFVKCHD) is interaction with GPIHBP1. Residues Cys-445 and Cys-465 are joined by a disulfide bond.

It belongs to the AB hydrolase superfamily. Lipase family. In terms of assembly, homodimer. Interacts with GPIHBP1 with 1:1 stoichiometry. Interacts with APOC2; the interaction activates LPL activity in the presence of lipids. Interaction with heparan sulfate proteoglycans is required to protect LPL against loss of activity. Associates with lipoprotein particles in blood plasma. Interacts with LMF1 and SEL1L; interaction with SEL1L is required to prevent aggregation of newly synthesized LPL in the endoplasmic reticulum (ER), and for normal export of LPL from the ER to the extracellular space. Interacts with SORL1; SORL1 acts as a sorting receptor, promoting LPL localization to endosomes and later to lysosomes, leading to degradation of newly synthesized LPL. In terms of processing, tyrosine nitration after lipopolysaccharide (LPS) challenge down-regulates the lipase activity.

The protein resides in the cell membrane. It localises to the secreted. It is found in the extracellular space. Its subcellular location is the extracellular matrix. The catalysed reaction is a triacylglycerol + H2O = a diacylglycerol + a fatty acid + H(+). It catalyses the reaction a 1,2-diacyl-sn-glycero-3-phosphocholine + H2O = a 2-acyl-sn-glycero-3-phosphocholine + a fatty acid + H(+). It carries out the reaction 1,2,3-tri-(9Z-octadecenoyl)-glycerol + H2O = di-(9Z)-octadecenoylglycerol + (9Z)-octadecenoate + H(+). The enzyme catalyses 1,2-di-(9Z-octadecenoyl)-sn-glycero-3-phosphocholine + H2O = (9Z-octadecenoyl)-sn-glycero-3-phosphocholine + (9Z)-octadecenoate + H(+). The catalysed reaction is 1,2,3-tributanoylglycerol + H2O = dibutanoylglycerol + butanoate + H(+). It catalyses the reaction 1,2-dihexadecanoyl-sn-glycero-3-phosphocholine + H2O = hexadecanoyl-sn-glycero-3-phosphocholine + hexadecanoate + H(+). The apolipoprotein APOC2 acts as a coactivator of LPL activity. Ca(2+) binding promotes protein stability and formation of the active homodimer. Interaction with GPIHBP1 protects LPL against inactivation by ANGPTL4. Functionally, key enzyme in triglyceride metabolism. Catalyzes the hydrolysis of triglycerides from circulating chylomicrons and very low density lipoproteins (VLDL), and thereby plays an important role in lipid clearance from the blood stream, lipid utilization and storage. Although it has both phospholipase and triglyceride lipase activities it is primarily a triglyceride lipase with low but detectable phospholipase activity. Mediates margination of triglyceride-rich lipoprotein particles in capillaries. Recruited to its site of action on the luminal surface of vascular endothelium by binding to GPIHBP1 and cell surface heparan sulfate proteoglycans. This chain is Lipoprotein lipase (Lpl), found in Rattus norvegicus (Rat).